The sequence spans 460 residues: Lysosomal proton-coupled steroid conjugate and bile acid symporter SLC46A3 (460 aa).

Positions 1-25 (MKISFIEPAILLNAFAMTLTIPLTA) are cleaved as a signal peptide. Topologically, residues 26–73 (QYVYRRIWEETGNYTFASNSNGSECDQNKSSSIFAFREEVQKKASLFN) are extracellular. N-linked (GlcNAc...) asparagine glycans are attached at residues asparagine 38, asparagine 46, and asparagine 53. Residues 74-94 (LQVEMSALIPGLVSTFMLLAS) form a helical membrane-spanning segment. Topologically, residues 95 to 111 (SDNHGRKLPMVLSSLGS) are cytoplasmic. A helical membrane pass occupies residues 112–132 (LGTNTWLCMMSYFDLPLQLLI). Topologically, residues 133–135 (AST) are extracellular. Residues 136–156 (FIGALFGNYTTFWGACFAYIV) traverse the membrane as a helical segment. Residues 157 to 170 (DQQKEYKHRIIRIA) lie on the Cytoplasmic side of the membrane. A helical membrane pass occupies residues 171-191 (ILDFMLGVVTGLTGLSSGYFI). The Extracellular segment spans residues 192 to 195 (RELG). Residues 196–216 (FVWSYFITAMVLIVNLAYILF) traverse the membrane as a helical segment. The Cytoplasmic segment spans residues 217-257 (FLNDPIKESSSQIVTMSCIESLKDLFYRTYMLFKNGSSKRQ). A helical transmembrane segment spans residues 258–278 (ALLCLLIFTLVIYFFVIIGIS). Residues 279–301 (PIFTLYELGPPLCWNEVYIGYGS) lie on the Extracellular side of the membrane. Residues 302 to 322 (ALGSVSFLSSFLGIWLFSYCL) form a helical membrane-spanning segment. Topologically, residues 323–324 (KD) are cytoplasmic. A helical transmembrane segment spans residues 325-345 (IHIAYIGIFTTMVGMTLAAFT). At 346 to 347 (RT) the chain is on the extracellular side. A helical membrane pass occupies residues 348–368 (TLMMFLVRIPFIFTIMPLSVL). Residues 369-381 (RSMLSKVVHSTEQ) are Cytoplasmic-facing. A helical membrane pass occupies residues 382 to 402 (GALFACIAFLETLAGVTSTSA). The Extracellular segment spans residues 403–410 (YSGIYSAT). The helical transmembrane segment at 411–431 (VAWYPGFIFLLSAGLLVLPAI) threads the bilayer. Over 432-460 (SLCCVKSIGWEEGSYTLLVHEEPSEHTSD) the chain is Cytoplasmic. Positions 446 to 449 (YTLL) match the Tyrosine-based lysosomal-sorting motif motif.

This sequence belongs to the major facilitator superfamily. SLC46A family. As to expression, expressed in liver, kidney, small intestine and colon.

Its subcellular location is the lysosome membrane. The catalysed reaction is estrone 3-sulfate(out) + n H(+)(out) = estrone 3-sulfate(in) + n H(+)(in). It catalyses the reaction 25-hydroxyvitamin D3 sulfate(out) + n H(+)(out) = 25-hydroxyvitamin D3 sulfate(in) + n H(+)(in). The enzyme catalyses cholate(out) + n H(+)(out) = cholate(in) + n H(+)(in). It carries out the reaction glycocholate(out) + n H(+)(out) = glycocholate(in) + n H(+)(in). The catalysed reaction is taurocholate(out) + n H(+)(out) = taurocholate(in) + n H(+)(in). It catalyses the reaction dehydroepiandrosterone 3-sulfate(out) + n H(+)(out) = dehydroepiandrosterone 3-sulfate(in) + n H(+)(in). The enzyme catalyses N-acetyl-D-muramoyl-L-alanyl-D-isoglutamine(out) + n H(+)(out) = N-acetyl-D-muramoyl-L-alanyl-D-isoglutamine(in) + n H(+)(in). It carries out the reaction 2',3'-cGAMP(out) + n H(+)(out) = 2',3'-cGAMP(in) + n H(+)(in). Lysosomal proton-coupled steroid conjugate and bile acid transporter. Preferentially recognizes lipophilic steroid conjugates or bile acis as endogenous substrates and seems to mediate escape from lysosomes to the cytoplasm. Modulates hepatic cytosolic copper homeostasis, maybe acting as a lysosomal copper transporter and sequestering copper ions in the lysosome. Delivers pathogen-associated molecular patterns to cytosolic pattern recognition receptors as part of the innate immune response to microbes. Selectively transports bacterial muramyl dipeptide (MDP) into the cytosol for recognition by NOD2, triggering inflammatory responses. Likely acts as a redundant importer of cyclic GMP-AMP dinucleotides (cGAMPs) in monocyte and macrophage cell lineages. The transport mechanism, its electrogenicity and stoichiometry remain to be elucidated. The chain is Lysosomal proton-coupled steroid conjugate and bile acid symporter SLC46A3 (Slc46a3) from Mus musculus (Mouse).